A 768-amino-acid polypeptide reads, in one-letter code: Cullin-3 (768 aa).

Ser-2 carries the N-acetylserine modification. Positions 2 to 41 are interaction with KLHL18; it reads SNLSKGTGSRKDTKMRIRAFPMTMDEKYVNSIWDLLKNAI. Ser-585 is subject to Phosphoserine. The segment at 677-698 is disordered; sequence VAAKQGESDPERKETRQKVDDD. Over residues 682–698 the composition is skewed to basic and acidic residues; that stretch reads GESDPERKETRQKVDDD. The Cullin neddylation domain occupies 698 to 760; sequence DRKHEIEAAI…REYLARTPED (63 aa). Lys-712 participates in a covalent cross-link: Glycyl lysine isopeptide (Lys-Gly) (interchain with G-Cter in NEDD8).

This sequence belongs to the cullin family. As to quaternary structure, forms neddylation-dependent homodimers. Component of multiple BCR (BTB-CUL3-RBX1) E3 ubiquitin-protein ligase complexes formed of CUL3, RBX1 and a variable BTB domain-containing protein acting as both, adapter to cullin and substrate recognition subunit. The BCR complex may be active as a heterodimeric complex, in which NEDD8, covalently attached to one CUL3 molecule, binds to the C-terminus of a second CUL3 molecule. Interacts with RBX1, RNF7 and TIP120A/CAND1. Part of the BCR(SPOP) containing SPOP, and of BCR containing homodimeric SPOPL or the heterodimer formed by SPOP and SPOPL. Part of the probable BCR(KLHL9-KLHL13) complex with BTB domain proteins KLHL9 and KLHL13. Part of the BCR(KLHL41) complex containing KLHL41. Component of the BCR(KLHL12) E3 ubiquitin ligase complex, at least composed of CUL3 and KLHL12 and RBX1. Component of the BCR(KLHL3) E3 ubiquitin ligase complex, at least composed of CUL3 and KLHL3 and RBX1. Part of the BCR(ENC1) complex containing ENC1. Part of a complex consisting of BMI1/PCGF4, CUL3 and SPOP. Part of a complex consisting of BRMS1, CUL3 and SPOP. Component of the BCR(KLHL21) E3 ubiquitin ligase complex, at least composed of CUL3, KLHL21 and RBX1. Component of the BCR(KLHL22) E3 ubiquitin ligase complex, at least composed of CUL3, KLHL22 and RBX1. Component of the BCR(KLHL25) E3 ubiquitin ligase complex, at least composed of CUL3, KLHL25 and RBX1. Part of a complex consisting of MACROH2A1, CUL3 and SPOP. Component of the BCR(KLHL42) E3 ubiquitin ligase complex, at least composed of CUL3 and KLHL42. Component of the BCR(KBTBD8) E3 ubiquitin ligase complex, at least composed of CUL3, KBTBD8 and RBX1. Interacts with KLHL42 (via the BTB domain). Interacts with KATNA1; the interaction is enhanced by KLHL42. Interacts with KCTD5, KLHL9, KLHL11, KLHL13, GAN, ZBTB16, KLHL3, KLHL15, KLHL20, KLHL36, GMCL2, BTBD1. Part of a complex that contains CUL3, RBX1 and GAN. Interacts (via BTB domain) with KLHL17; the interaction regulates surface GRIK2 expression. Interacts with KCTD7. Part of the BCR(GAN) complex containing GAN. Part of the BCR(KEAP1) complex containing KEAP1. Interacts with KAT5 and ATF2. Interacts with KCTD17 in the BCR(KCTD17) E3 ubiquitin ligase complex, at least composed of CUL3, KCTD17 and RBX1. Interacts (when neddylated) with ARIH1; leading to activate the E3 ligase activity of ARIH1. Interacts with COPS9. Interacts with PPP2R5B; this interaction is indirect and mediated through KLHL15-binding and leads to PPP2R5B proteasomal degradation. Interacts with RBBP8/CtIP; this interaction is indirect and mediated through KLHL15-binding and leads to RBBP8 proteasomal degradation. Interacts with KLHL24 in the BCR(KLHL24) E3 ubiquitin ligase complex, composed of CUL3, RBX1 and KLHL24. Interacts with RHOBTB2. Interacts with CYCE. Interacts with KLHL10. Interacts with AURKA and KLHL18 (via BTB domain). Interacts (unneddylated form) with DCUN1D1, DCUN1D2, DCUN1D3, DCUN1D4 and DCUN1D5; these interactions promote the cullin neddylation. Component of a BCR3 (BTB-CUL3-RBX1) E3 ubiquitin ligase complex, also named Cul3-RING ubiquitin ligase complex CUL3(KBTBD6/7), composed of CUL3, RBX1, KBTBD6 and KBTBD7. Component of the BCR(KBTBD2) E3 ubiquitin ligase complex, at least composed of CUL3, KBTBD2 and RBX1. Interacts with KBTBD2 (via the BTB domain). Component of the BCR(KBTBD4) E3 ubiquitin ligase complex, at least composed of CUL3, KBTBD4 and RBX1. Neddylated. Attachment of NEDD8 is required for the E3 ubiquitin-protein ligase activity of the BCR complex. Deneddylated via its interaction with the COP9 signalosome (CSN) complex. As to expression, widely expressed, with highest expression in brain, spleen and testis. In the testis, it is mainly expressed in spermatids.

It is found in the nucleus. The protein localises to the golgi apparatus. It localises to the cell projection. Its subcellular location is the cilium. The protein resides in the flagellum. It is found in the cytoplasm. The protein localises to the cytoskeleton. It localises to the spindle. Its subcellular location is the microtubule organizing center. The protein resides in the centrosome. It is found in the spindle pole. It functions in the pathway protein modification; protein ubiquitination. Functionally, core component of multiple cullin-RING-based BCR (BTB-CUL3-RBX1) E3 ubiquitin-protein ligase complexes which mediate the ubiquitination and subsequent proteasomal degradation of target proteins. BCR complexes and ARIH1 collaborate in tandem to mediate ubiquitination of target proteins. As a scaffold protein may contribute to catalysis through positioning of the substrate and the ubiquitin-conjugating enzyme. The E3 ubiquitin-protein ligase activity of the complex is dependent on the neddylation of the cullin subunit and is inhibited by the association of the deneddylated cullin subunit with TIP120A/CAND1. The functional specificity of the BCR complex depends on the BTB domain-containing protein as the substrate recognition component. BCR(KLHL42) is involved in ubiquitination of KATNA1. BCR(SPOP) is involved in ubiquitination of BMI1/PCGF4, BRMS1, MACROH2A1 and DAXX, GLI2 and GLI3. Can also form a cullin-RING-based BCR (BTB-CUL3-RBX1) E3 ubiquitin-protein ligase complex containing homodimeric SPOPL or the heterodimer formed by SPOP and SPOPL; these complexes have lower ubiquitin ligase activity. BCR(KLHL9-KLHL13) controls the dynamic behavior of AURKB on mitotic chromosomes and thereby coordinates faithful mitotic progression and completion of cytokinesis. BCR(KLHL12) is involved in ER-Golgi transport by regulating the size of COPII coats, thereby playing a key role in collagen export, which is required for embryonic stem (ES) cells division: BCR(KLHL12) acts by mediating monoubiquitination of SEC31 (SEC31A or SEC31B). BCR(KLHL3) acts as a regulator of ion transport in the distal nephron; by mediating ubiquitination of WNK4. The BCR(KLHL20) E3 ubiquitin ligase complex is involved in interferon response and anterograde Golgi to endosome transport: it mediates both ubiquitination leading to degradation and 'Lys-33'-linked ubiquitination. The BCR(KLHL21) E3 ubiquitin ligase complex regulates localization of the chromosomal passenger complex (CPC) from chromosomes to the spindle midzone in anaphase and mediates the ubiquitination of AURKB. The BCR(KLHL22) ubiquitin ligase complex mediates monoubiquitination of PLK1, leading to PLK1 dissociation from phosphoreceptor proteins and subsequent removal from kinetochores, allowing silencing of the spindle assembly checkpoint (SAC) and chromosome segregation. The BCR(KLHL22) ubiquitin ligase complex is also responsible for the amino acid-stimulated 'Lys-48' polyubiquitination and proteasomal degradation of DEPDC5. Through the degradation of DEPDC5, releases the GATOR1 complex-mediated inhibition of the TORC1 pathway. The BCR(KLHL25) ubiquitin ligase complex is involved in translational homeostasis by mediating ubiquitination and subsequent degradation of hypophosphorylated EIF4EBP1 (4E-BP1). The BCR(KLHL25) ubiquitin ligase complex is also involved in lipid synthesis by mediating ubiquitination and degradation of ACLY. The BCR(KBTBD8) complex acts by mediating monoubiquitination of NOLC1 and TCOF1, leading to remodel the translational program of differentiating cells in favor of neural crest specification. Involved in ubiquitination of cyclin E and of cyclin D1 (in vitro) thus involved in regulation of G1/S transition. Involved in the ubiquitination of KEAP1, ENC1 and KLHL41. In concert with ATF2 and RBX1, promotes degradation of KAT5 thereby attenuating its ability to acetylate and activate ATM. The BCR(KCTD17) E3 ubiquitin ligase complex mediates ubiquitination and degradation of TCHP, a down-regulator of cilium assembly, thereby inducing ciliogenesis. The BCR(KLHL24) E3 ubiquitin ligase complex mediates ubiquitination of KRT14, controls KRT14 levels during keratinocytes differentiation, and is essential for skin integrity. The BCR(KLHL18) E3 ubiquitin ligase complex mediates the ubiquitination of AURKA leading to its activation at the centrosome which is required for initiating mitotic entry. The BCR(KEAP1) E3 ubiquitin ligase complex acts as a key sensor of oxidative and electrophilic stress by mediating ubiquitination and degradation of NFE2L2/NRF2, a transcription factor regulating expression of many cytoprotective genes. As part of the CUL3(KBTBD6/7) E3 ubiquitin ligase complex functions mediates 'Lys-48' ubiquitination and proteasomal degradation of TIAM1. By controlling the ubiquitination of that RAC1 guanine exchange factors (GEF), regulates RAC1 signal transduction and downstream biological processes including the organization of the cytoskeleton, cell migration and cell proliferation. The BCR(KBTBD4) E3 ubiquitin ligase complex targets CoREST corepressor complex components RCOR1, KDM1A/LSD1 and HDAC2 for proteasomal degradation with RCOR1 likely to be the primary target while degradation of KDM1A and HDAC2 is likely due to their association with RCOR1. It also targets RCOR3, MIER2 and MIER3 for proteasomal degradation as well as associated proteins ZNF217 and RREB1 with degradation being dependent on the presence of an ELM2 domain in the target proteins. The BCR(ARMC5) complex mediates premature transcription termination of transcripts that are unfavorably configured for transcriptional elongation by mediating ubiquitination of Pol II subunit POLR2A. Required for 'Lys-63'-linked ubiquitination of large ribosomal subunit protein MRPL12. This chain is Cullin-3 (Cul3), found in Mus musculus (Mouse).